Here is a 267-residue protein sequence, read N- to C-terminus: Apolipoprotein A-I (267 aa).

The N-terminal stretch at 1–18 is a signal peptide; it reads MKAAVLTLAVLFLTGSQA. 2 tandem repeats follow at residues 68–89 and 90–111. Residues 68–267 form a 10 X approximate tandem repeats region; the sequence is LKLLDNWDSL…EEYAKKLSSQ (200 aa). Residue Met110 is modified to Methionine sulfoxide. One copy of the 3; half-length repeat lies at 112–122; it reads KDLEEVKAKVQ. 5 consecutive repeat copies span residues 123 to 144, 145 to 166, 167 to 188, 189 to 210, and 211 to 232. The 9; half-length repeat unit spans residues 233–243; it reads PALEDLRQGLL. Repeat unit 10 spans residues 244 to 267; that stretch reads PVLESFKVSFLSALEEYAKKLSSQ.

Belongs to the apolipoprotein A1/A4/E family. Homodimer. Interacts with APOA1BP and CLU. Component of a sperm activating protein complex (SPAP), consisting of APOA1, an immunoglobulin heavy chain, an immunoglobulin light chain and albumin. Interacts with NDRG1. Interacts with SCGB3A2. Interacts with NAXE and YJEFN3. Glycosylated. In terms of processing, palmitoylated. Post-translationally, phosphorylation sites are present in the extracellular medium.

The protein localises to the secreted. In terms of biological role, participates in the reverse transport of cholesterol from tissues to the liver for excretion by promoting cholesterol efflux from tissues and by acting as a cofactor for the lecithin cholesterol acyltransferase (LCAT). As part of the SPAP complex, activates spermatozoa motility. This chain is Apolipoprotein A-I (APOA1), found in Cebus imitator (Panamanian white-faced capuchin).